We begin with the raw amino-acid sequence, 95 residues long: Co-chaperonin GroES (95 aa).

This sequence belongs to the GroES chaperonin family. Heptamer of 7 subunits arranged in a ring. Interacts with the chaperonin GroEL.

The protein resides in the cytoplasm. Functionally, together with the chaperonin GroEL, plays an essential role in assisting protein folding. The GroEL-GroES system forms a nano-cage that allows encapsulation of the non-native substrate proteins and provides a physical environment optimized to promote and accelerate protein folding. GroES binds to the apical surface of the GroEL ring, thereby capping the opening of the GroEL channel. The polypeptide is Co-chaperonin GroES (Francisella tularensis subsp. holarctica (strain FTNF002-00 / FTA)).